The following is a 358-amino-acid chain: Fructose-bisphosphate aldolase 5, cytosolic (358 aa).

Ser-2 carries the post-translational modification N-acetylserine. Residue Arg-39 participates in substrate binding. An S-glutathionyl cysteine; transient modification is found at Cys-68. Cys-173 carries the S-glutathionyl cysteine; transient; alternate modification. Cys-173 bears the S-nitrosocysteine; transient; alternate mark. Glu-183 acts as the Proton acceptor in catalysis. Lys-225 functions as the Schiff-base intermediate with dihydroxyacetone-P in the catalytic mechanism. Substrate contacts are provided by residues 266–268 (SGG) and Arg-298. Residue Ser-350 is modified to Phosphoserine.

This sequence belongs to the class I fructose-bisphosphate aldolase family. In terms of assembly, homotetramer. Interacts with TRX3. S-glutathionylated at Cys-68 and Cys-173. In terms of processing, S-nitrosylated at Cys-173. Expressed in rosette leaves and cauline leaves.

Its subcellular location is the cytoplasm. The protein localises to the cytosol. It catalyses the reaction beta-D-fructose 1,6-bisphosphate = D-glyceraldehyde 3-phosphate + dihydroxyacetone phosphate. The protein operates within carbohydrate degradation; glycolysis; D-glyceraldehyde 3-phosphate and glycerone phosphate from D-glucose: step 4/4. Its function is as follows. Fructose-bisphosphate aldolase that plays a key role in glycolysis and gluconeogenesis. In Arabidopsis thaliana (Mouse-ear cress), this protein is Fructose-bisphosphate aldolase 5, cytosolic.